The following is a 176-amino-acid chain: Conjugal transfer protein TraF (176 aa).

A signal peptide spans 1-24 (MSKRAVIRFLGVAGLVLSGATVMG).

This sequence belongs to the peptidase S26C family.

The protein localises to the periplasm. Involved in conjugal transfer of the plasmid. The chain is Conjugal transfer protein TraF (traF) from Agrobacterium fabrum (strain C58 / ATCC 33970) (Agrobacterium tumefaciens (strain C58)).